A 155-amino-acid chain; its full sequence is Snaclec clone 2100755 (155 aa).

An N-terminal signal peptide occupies residues 1 to 23; sequence MGRFIFVSFGLLVVFLSLSGTAA. Cystine bridges form between Cys25–Cys36, Cys53–Cys144, and Cys119–Cys136. The 114-residue stretch at 32–145 folds into the C-type lectin domain; that stretch reads YDGHCYQVFS…CEKSVSFVCK (114 aa).

This sequence belongs to the snaclec family. Heterodimer; disulfide-linked.

The protein resides in the secreted. In terms of biological role, interferes with one step of hemostasis (modulation of platelet aggregation, or coagulation cascade, for example). The polypeptide is Snaclec clone 2100755 (Deinagkistrodon acutus (Hundred-pace snake)).